The sequence spans 106 residues: UPF0145 protein CTC_01500 (106 aa).

It belongs to the UPF0145 family.

This is UPF0145 protein CTC_01500 from Clostridium tetani (strain Massachusetts / E88).